We begin with the raw amino-acid sequence, 873 residues long: Probable beta-glucosidase A (873 aa).

The signal sequence occupies residues 1 to 19 (MRFGWLEVAALTAASVANA). N-linked (GlcNAc...) asparagine glycosylation is found at Asn71, Asn222, and Asn263. The active site involves Asp291. 9 N-linked (GlcNAc...) asparagine glycosylation sites follow: Asn326, Asn333, Asn365, Asn453, Asn534, Asn553, Asn575, Asn679, and Asn725. The disordered stretch occupies residues 731–764 (DSSDDPNYGWEDSEYIPEGARDGSPQPLLKAGGA).

Belongs to the glycosyl hydrolase 3 family.

Its subcellular location is the secreted. The catalysed reaction is Hydrolysis of terminal, non-reducing beta-D-glucosyl residues with release of beta-D-glucose.. It functions in the pathway glycan metabolism; cellulose degradation. In terms of biological role, beta-glucosidases are one of a number of cellulolytic enzymes involved in the degradation of cellulosic biomass. Catalyzes the last step releasing glucose from the inhibitory cellobiose. This chain is Probable beta-glucosidase A (bglA), found in Aspergillus fumigatus (strain CBS 144.89 / FGSC A1163 / CEA10) (Neosartorya fumigata).